The following is a 336-amino-acid chain: Dihydroorotate dehydrogenase (quinone) (336 aa).

Residues Ala-62 to Lys-66 and Thr-86 contribute to the FMN site. Position 66 (Lys-66) interacts with substrate. A substrate-binding site is contributed by Asn-111–Phe-115. Asn-139 and Asn-172 together coordinate FMN. Asn-172 provides a ligand contact to substrate. The Nucleophile role is filled by Ser-175. Asn-177 is a binding site for substrate. Residues Lys-217 and Thr-245 each contribute to the FMN site. Asn-246 to Thr-247 contributes to the substrate binding site. Residues Gly-268, Gly-297, and Tyr-318–Thr-319 contribute to the FMN site.

It belongs to the dihydroorotate dehydrogenase family. Type 2 subfamily. In terms of assembly, monomer. FMN serves as cofactor.

It localises to the cell membrane. It carries out the reaction (S)-dihydroorotate + a quinone = orotate + a quinol. It participates in pyrimidine metabolism; UMP biosynthesis via de novo pathway; orotate from (S)-dihydroorotate (quinone route): step 1/1. Catalyzes the conversion of dihydroorotate to orotate with quinone as electron acceptor. The polypeptide is Dihydroorotate dehydrogenase (quinone) (Pseudoalteromonas translucida (strain TAC 125)).